The following is a 355-amino-acid chain: Protein pelota homolog (355 aa).

It belongs to the eukaryotic release factor 1 family. Pelota subfamily. As to quaternary structure, monomer. The cofactor is a divalent metal cation.

It is found in the cytoplasm. In terms of biological role, may function in recognizing stalled ribosomes, interact with stem-loop structures in stalled mRNA molecules, and effect endonucleolytic cleavage of the mRNA. May play a role in the release non-functional ribosomes and degradation of damaged mRNAs. Has endoribonuclease activity. The polypeptide is Protein pelota homolog (Halorubrum lacusprofundi (strain ATCC 49239 / DSM 5036 / JCM 8891 / ACAM 34)).